The chain runs to 66 residues: Beta-defensin 134 (66 aa).

Residues 1–19 (MKPLLVVFVFLFLWDPVLA) form the signal peptide. Disulfide bonds link C32–C58, C38–C52, and C42–C59.

This sequence belongs to the beta-defensin family.

The protein resides in the secreted. Has antibacterial activity. This chain is Beta-defensin 134 (DEFB134), found in Homo sapiens (Human).